The primary structure comprises 458 residues: ATP-dependent protease ATPase subunit HslU (458 aa).

Residues V18, 60-65 (GVGKTE), D270, E335, and R407 each bind ATP.

The protein belongs to the ClpX chaperone family. HslU subfamily. As to quaternary structure, a double ring-shaped homohexamer of HslV is capped on each side by a ring-shaped HslU homohexamer. The assembly of the HslU/HslV complex is dependent on binding of ATP.

It localises to the cytoplasm. Functionally, ATPase subunit of a proteasome-like degradation complex; this subunit has chaperone activity. The binding of ATP and its subsequent hydrolysis by HslU are essential for unfolding of protein substrates subsequently hydrolyzed by HslV. HslU recognizes the N-terminal part of its protein substrates and unfolds these before they are guided to HslV for hydrolysis. In Desulfitobacterium hafniense (strain DSM 10664 / DCB-2), this protein is ATP-dependent protease ATPase subunit HslU.